The chain runs to 82 residues: Acyl carrier protein (82 aa).

The Carrier domain maps to 3 to 81 (LSREKVLESI…DAVDFIIAAK (79 aa)). O-(pantetheine 4'-phosphoryl)serine is present on Ser41.

The protein belongs to the acyl carrier protein (ACP) family. Post-translationally, 4'-phosphopantetheine is transferred from CoA to a specific serine of apo-ACP by AcpS. This modification is essential for activity because fatty acids are bound in thioester linkage to the sulfhydryl of the prosthetic group.

The protein resides in the cytoplasm. It functions in the pathway lipid metabolism; fatty acid biosynthesis. Carrier of the growing fatty acid chain in fatty acid biosynthesis. The chain is Acyl carrier protein from Tropheryma whipplei (strain Twist) (Whipple's bacillus).